A 250-amino-acid polypeptide reads, in one-letter code: 5'-nucleotidase SurE (250 aa).

Positions 8, 9, 39, and 92 each coordinate a divalent metal cation.

Belongs to the SurE nucleotidase family. A divalent metal cation is required as a cofactor.

It localises to the cytoplasm. It carries out the reaction a ribonucleoside 5'-phosphate + H2O = a ribonucleoside + phosphate. Nucleotidase that shows phosphatase activity on nucleoside 5'-monophosphates. In Vibrio cholerae serotype O1 (strain ATCC 39315 / El Tor Inaba N16961), this protein is 5'-nucleotidase SurE.